We begin with the raw amino-acid sequence, 133 residues long: uncharacterized protein (133 aa).

The chain crosses the membrane as a helical span at residues 91-113 (LFATALISCIPSSFSALSFLATL).

It is found in the membrane. This is an uncharacterized protein from Saccharomyces cerevisiae (strain ATCC 204508 / S288c) (Baker's yeast).